The primary structure comprises 932 residues: Glycine dehydrogenase (decarboxylating) (932 aa).

Lys685 carries the post-translational modification N6-(pyridoxal phosphate)lysine.

This sequence belongs to the GcvP family. The glycine cleavage system is composed of four proteins: P, T, L and H. It depends on pyridoxal 5'-phosphate as a cofactor.

It carries out the reaction N(6)-[(R)-lipoyl]-L-lysyl-[glycine-cleavage complex H protein] + glycine + H(+) = N(6)-[(R)-S(8)-aminomethyldihydrolipoyl]-L-lysyl-[glycine-cleavage complex H protein] + CO2. The glycine cleavage system catalyzes the degradation of glycine. The P protein binds the alpha-amino group of glycine through its pyridoxal phosphate cofactor; CO(2) is released and the remaining methylamine moiety is then transferred to the lipoamide cofactor of the H protein. This chain is Glycine dehydrogenase (decarboxylating), found in Brucella melitensis biotype 2 (strain ATCC 23457).